A 552-amino-acid polypeptide reads, in one-letter code: Urocanate hydratase (552 aa).

NAD(+) contacts are provided by residues 49–50 (GG), Gln-127, 173–175 (GMG), Asp-193, 239–240 (NA), 260–264 (QTSAH), 270–271 (YI), and Tyr-319. The active site involves Cys-407. NAD(+) is bound at residue Gly-489.

Belongs to the urocanase family. NAD(+) serves as cofactor.

The protein resides in the cytoplasm. It carries out the reaction 4-imidazolone-5-propanoate = trans-urocanate + H2O. Its pathway is amino-acid degradation; L-histidine degradation into L-glutamate; N-formimidoyl-L-glutamate from L-histidine: step 2/3. In terms of biological role, catalyzes the conversion of urocanate to 4-imidazolone-5-propionate. The protein is Urocanate hydratase of Bacillus cereus (strain B4264).